Reading from the N-terminus, the 113-residue chain is Ribonuclease P protein component (113 aa).

It belongs to the RnpA family. Consists of a catalytic RNA component (M1 or rnpB) and a protein subunit.

The enzyme catalyses Endonucleolytic cleavage of RNA, removing 5'-extranucleotides from tRNA precursor.. RNaseP catalyzes the removal of the 5'-leader sequence from pre-tRNA to produce the mature 5'-terminus. It can also cleave other RNA substrates such as 4.5S RNA. The protein component plays an auxiliary but essential role in vivo by binding to the 5'-leader sequence and broadening the substrate specificity of the ribozyme. The polypeptide is Ribonuclease P protein component (Ligilactobacillus salivarius (strain UCC118) (Lactobacillus salivarius)).